We begin with the raw amino-acid sequence, 252 residues long: 3-dehydroquinate dehydratase (252 aa).

3-dehydroquinate is bound by residues Ser-21, 46–48 (EWR), and Arg-82. Catalysis depends on His-143, which acts as the Proton donor/acceptor. The Schiff-base intermediate with substrate role is filled by Lys-170. 3-dehydroquinate contacts are provided by Arg-213, Ser-232, and Gln-236.

The protein belongs to the type-I 3-dehydroquinase family. Homodimer.

The catalysed reaction is 3-dehydroquinate = 3-dehydroshikimate + H2O. It functions in the pathway metabolic intermediate biosynthesis; chorismate biosynthesis; chorismate from D-erythrose 4-phosphate and phosphoenolpyruvate: step 3/7. Involved in the third step of the chorismate pathway, which leads to the biosynthesis of aromatic amino acids. Catalyzes the cis-dehydration of 3-dehydroquinate (DHQ) and introduces the first double bond of the aromatic ring to yield 3-dehydroshikimate. This chain is 3-dehydroquinate dehydratase, found in Escherichia coli O127:H6 (strain E2348/69 / EPEC).